A 273-amino-acid polypeptide reads, in one-letter code: Light-independent protochlorophyllide reductase iron-sulfur ATP-binding protein (273 aa).

ATP is bound by residues 12-17 and lysine 41; that span reads GIGKST. Serine 16 is a binding site for Mg(2+). The [4Fe-4S] cluster site is built by cysteine 97 and cysteine 131. 182–183 contacts ATP; sequence NR.

The protein belongs to the NifH/BchL/ChlL family. As to quaternary structure, homodimer. Protochlorophyllide reductase is composed of three subunits; BchL, BchN and BchB. Requires [4Fe-4S] cluster as cofactor.

The enzyme catalyses chlorophyllide a + oxidized 2[4Fe-4S]-[ferredoxin] + 2 ADP + 2 phosphate = protochlorophyllide a + reduced 2[4Fe-4S]-[ferredoxin] + 2 ATP + 2 H2O. Its pathway is porphyrin-containing compound metabolism; bacteriochlorophyll biosynthesis (light-independent). Its function is as follows. Component of the dark-operative protochlorophyllide reductase (DPOR) that uses Mg-ATP and reduced ferredoxin to reduce ring D of protochlorophyllide (Pchlide) to form chlorophyllide a (Chlide). This reaction is light-independent. The L component serves as a unique electron donor to the NB-component of the complex, and binds Mg-ATP. This chain is Light-independent protochlorophyllide reductase iron-sulfur ATP-binding protein, found in Chloroflexus aurantiacus (strain ATCC 29364 / DSM 637 / Y-400-fl).